The sequence spans 171 residues: 3-hydroxydecanoyl-[acyl-carrier-protein] dehydratase (171 aa).

The active site involves His-70.

It belongs to the thioester dehydratase family. FabA subfamily. Homodimer.

Its subcellular location is the cytoplasm. It catalyses the reaction a (3R)-hydroxyacyl-[ACP] = a (2E)-enoyl-[ACP] + H2O. It carries out the reaction (3R)-hydroxydecanoyl-[ACP] = (2E)-decenoyl-[ACP] + H2O. The enzyme catalyses (2E)-decenoyl-[ACP] = (3Z)-decenoyl-[ACP]. The protein operates within lipid metabolism; fatty acid biosynthesis. Necessary for the introduction of cis unsaturation into fatty acids. Catalyzes the dehydration of (3R)-3-hydroxydecanoyl-ACP to E-(2)-decenoyl-ACP and then its isomerization to Z-(3)-decenoyl-ACP. Can catalyze the dehydratase reaction for beta-hydroxyacyl-ACPs with saturated chain lengths up to 16:0, being most active on intermediate chain length. The sequence is that of 3-hydroxydecanoyl-[acyl-carrier-protein] dehydratase from Xanthomonas oryzae pv. oryzae (strain MAFF 311018).